Here is a 462-residue protein sequence, read N- to C-terminus: Cytochrome c biogenesis protein CcsB (462 aa).

A run of 3 helical transmembrane segments spans residues 30 to 50 (LRVA…GTVI), 89 to 109 (TWWY…CTFR), and 175 to 195 (IGPI…IWGA).

It belongs to the Ccs1/CcsB family. In terms of assembly, may interact with CcsA.

It localises to the cellular thylakoid membrane. In terms of biological role, required during biogenesis of c-type cytochromes (cytochrome c6 and cytochrome f) at the step of heme attachment. The polypeptide is Cytochrome c biogenesis protein CcsB (Picosynechococcus sp. (strain ATCC 27264 / PCC 7002 / PR-6) (Agmenellum quadruplicatum)).